A 108-amino-acid chain; its full sequence is Urease subunit gamma (108 aa).

The protein belongs to the urease gamma subunit family. In terms of assembly, heterotrimer of UreA (gamma), UreB (beta) and UreC (alpha) subunits. Three heterotrimers associate to form the active enzyme.

Its subcellular location is the cytoplasm. It catalyses the reaction urea + 2 H2O + H(+) = hydrogencarbonate + 2 NH4(+). It participates in nitrogen metabolism; urea degradation; CO(2) and NH(3) from urea (urease route): step 1/1. This Trichodesmium erythraeum (strain IMS101) protein is Urease subunit gamma.